The primary structure comprises 290 residues: S-methyl-5'-thioadenosine phosphorylase (290 aa).

Phosphate contacts are provided by residues Ser11, 53-54 (RH), and 86-87 (SA). Met184 serves as a coordination point for substrate. Thr185 lines the phosphate pocket. 208–210 (DYD) contributes to the substrate binding site.

Belongs to the PNP/MTAP phosphorylase family. MTAP subfamily. Homohexamer. Dimer of a homotrimer.

The catalysed reaction is S-methyl-5'-thioadenosine + phosphate = 5-(methylsulfanyl)-alpha-D-ribose 1-phosphate + adenine. It functions in the pathway amino-acid biosynthesis; L-methionine biosynthesis via salvage pathway; S-methyl-5-thio-alpha-D-ribose 1-phosphate from S-methyl-5'-thioadenosine (phosphorylase route): step 1/1. Its function is as follows. Catalyzes the reversible phosphorylation of S-methyl-5'-thioadenosine (MTA) to adenine and 5-methylthioribose-1-phosphate. Involved in the breakdown of MTA, a major by-product of polyamine biosynthesis. Responsible for the first step in the methionine salvage pathway after MTA has been generated from S-adenosylmethionine. Has broad substrate specificity with 6-aminopurine nucleosides as preferred substrates. This Cereibacter sphaeroides (strain ATCC 17023 / DSM 158 / JCM 6121 / CCUG 31486 / LMG 2827 / NBRC 12203 / NCIMB 8253 / ATH 2.4.1.) (Rhodobacter sphaeroides) protein is S-methyl-5'-thioadenosine phosphorylase.